A 445-amino-acid chain; its full sequence is GTPase Der (445 aa).

EngA-type G domains lie at 3-167 (PVIA…YAGQ) and 180-353 (IKIA…AAAM). Residues 9-16 (GRPNVGKS), 56-60 (DTGGF), 119-122 (NKAE), 186-193 (GRPNVGKS), 233-237 (DTAGL), and 298-301 (NKWD) contribute to the GTP site. The region spanning 354-438 (AKLPTPKLTR…PLRIEFRSSN (85 aa)) is the KH-like domain.

Belongs to the TRAFAC class TrmE-Era-EngA-EngB-Septin-like GTPase superfamily. EngA (Der) GTPase family. In terms of assembly, associates with the 50S ribosomal subunit.

Its function is as follows. GTPase that plays an essential role in the late steps of ribosome biogenesis. The chain is GTPase Der from Burkholderia vietnamiensis (strain G4 / LMG 22486) (Burkholderia cepacia (strain R1808)).